The chain runs to 292 residues: ATP synthase gamma chain (292 aa).

Belongs to the ATPase gamma chain family. As to quaternary structure, F-type ATPases have 2 components, CF(1) - the catalytic core - and CF(0) - the membrane proton channel. CF(1) has five subunits: alpha(3), beta(3), gamma(1), delta(1), epsilon(1). CF(0) has three main subunits: a, b and c.

Its subcellular location is the cell membrane. Its function is as follows. Produces ATP from ADP in the presence of a proton gradient across the membrane. The gamma chain is believed to be important in regulating ATPase activity and the flow of protons through the CF(0) complex. The sequence is that of ATP synthase gamma chain from Caldicellulosiruptor saccharolyticus (strain ATCC 43494 / DSM 8903 / Tp8T 6331).